Consider the following 211-residue polypeptide: 2,3-bisphosphoglycerate-dependent phosphoglycerate mutase (211 aa).

Residues arginine 9 to asparagine 16, threonine 22 to glycine 23, arginine 61, glutamate 88 to tyrosine 91, lysine 99, arginine 115 to arginine 116, and glycine 159 to asparagine 160 each bind substrate. The active-site Tele-phosphohistidine intermediate is histidine 10. The active-site Proton donor/acceptor is glutamate 88.

This sequence belongs to the phosphoglycerate mutase family. BPG-dependent PGAM subfamily. In terms of assembly, homodimer.

It carries out the reaction (2R)-2-phosphoglycerate = (2R)-3-phosphoglycerate. Its pathway is carbohydrate degradation; glycolysis; pyruvate from D-glyceraldehyde 3-phosphate: step 3/5. In terms of biological role, catalyzes the interconversion of 2-phosphoglycerate and 3-phosphoglycerate. This chain is 2,3-bisphosphoglycerate-dependent phosphoglycerate mutase, found in Rhizobium meliloti (strain 1021) (Ensifer meliloti).